We begin with the raw amino-acid sequence, 207 residues long: Thiamine-phosphate synthase (207 aa).

4-amino-2-methyl-5-(diphosphooxymethyl)pyrimidine is bound by residues 37-41 and N69; that span reads QLREK. Mg(2+) contacts are provided by D70 and D89. S108 is a 4-amino-2-methyl-5-(diphosphooxymethyl)pyrimidine binding site. 134-136 contacts 2-[(2R,5Z)-2-carboxy-4-methylthiazol-5(2H)-ylidene]ethyl phosphate; sequence TGS. K137 is a binding site for 4-amino-2-methyl-5-(diphosphooxymethyl)pyrimidine. Residues G165 and 185–186 contribute to the 2-[(2R,5Z)-2-carboxy-4-methylthiazol-5(2H)-ylidene]ethyl phosphate site; that span reads IS.

It belongs to the thiamine-phosphate synthase family. Requires Mg(2+) as cofactor.

It carries out the reaction 2-[(2R,5Z)-2-carboxy-4-methylthiazol-5(2H)-ylidene]ethyl phosphate + 4-amino-2-methyl-5-(diphosphooxymethyl)pyrimidine + 2 H(+) = thiamine phosphate + CO2 + diphosphate. The catalysed reaction is 2-(2-carboxy-4-methylthiazol-5-yl)ethyl phosphate + 4-amino-2-methyl-5-(diphosphooxymethyl)pyrimidine + 2 H(+) = thiamine phosphate + CO2 + diphosphate. It catalyses the reaction 4-methyl-5-(2-phosphooxyethyl)-thiazole + 4-amino-2-methyl-5-(diphosphooxymethyl)pyrimidine + H(+) = thiamine phosphate + diphosphate. It functions in the pathway cofactor biosynthesis; thiamine diphosphate biosynthesis; thiamine phosphate from 4-amino-2-methyl-5-diphosphomethylpyrimidine and 4-methyl-5-(2-phosphoethyl)-thiazole: step 1/1. Condenses 4-methyl-5-(beta-hydroxyethyl)thiazole monophosphate (THZ-P) and 2-methyl-4-amino-5-hydroxymethyl pyrimidine pyrophosphate (HMP-PP) to form thiamine monophosphate (TMP). The chain is Thiamine-phosphate synthase from Desulfitobacterium hafniense (strain Y51).